The chain runs to 363 residues: Cytochrome b (363 aa).

Helical transmembrane passes span 23 to 43 (FGFILGILLVLQIISGLMLSF), 67 to 89 (WFVRLYHSFGVSFYFFFMFLHIM), 102 to 122 (SWYSGVVIFVLSIATAFVGYV), and 164 to 184 (FFSIHVILPVIILLVVIFHLY). His73 and His87 together coordinate heme b. Heme b-binding residues include His168 and His182. His187 contributes to the a ubiquinone binding site. 4 consecutive transmembrane segments (helical) span residues 210 to 230 (VLFSDIRFIVIVILLIGVQSG), 271 to 291 (VFPTKVAGLLAMAGMLELLVL), 310 to 330 (VWTTSSVPLVPVLFMLGSIGK), and 332 to 352 (VVHVDLIAIGTCVVLSVVLFI).

It belongs to the cytochrome b family. As to quaternary structure, the main subunits of complex b-c1 are: cytochrome b, cytochrome c1 and the Rieske protein. Requires heme b as cofactor.

The protein resides in the mitochondrion inner membrane. Component of the ubiquinol-cytochrome c reductase complex (complex III or cytochrome b-c1 complex) that is part of the mitochondrial respiratory chain. The b-c1 complex mediates electron transfer from ubiquinol to cytochrome c. Contributes to the generation of a proton gradient across the mitochondrial membrane that is then used for ATP synthesis. This Theileria annulata protein is Cytochrome b (MT-CYB).